The primary structure comprises 328 residues: Radiation response metalloprotease IrrE (328 aa).

The segment at 1–31 is disordered; the sequence is MPSANVSPPCPSGVRGGGMGPKAKAEASKPH. Residue histidine 118 coordinates Zn(2+). Glutamate 119 is an active-site residue. Zn(2+)-binding residues include histidine 122 and glutamate 149. 2 disordered regions span residues 217-238 and 309-328; these read PREQ…LTVR and RLGR…DAAQ.

Functionally, plays a central regulatory role in DNA repair and protection pathways in response to radiation stress. Acts as a site-specific metalloprotease that cleaves and inactivates the repressor protein DdrO, resulting in induced expression of genes required for DNA repair and cell survival after exposure to radiation. Regulates the expression of dozens of proteins from different pathways, including the important DNA repair proteins RecA and PprA. Binds to the promoters of recA and pprA. The sequence is that of Radiation response metalloprotease IrrE from Deinococcus radiodurans (strain ATCC 13939 / DSM 20539 / JCM 16871 / CCUG 27074 / LMG 4051 / NBRC 15346 / NCIMB 9279 / VKM B-1422 / R1).